Reading from the N-terminus, the 291-residue chain is MTFTWPSPAKLNLFLYITGRRADGYHQLQTLFQFLNYGDEITITPRQDNEIRLLTPVEGVEHDNNLIVRAARLLQSYSDKHHAGIAHKGADIHINKRLPMGGGLGGGSSNAATVLIALNYHWQTGFTDETLAALGVSLGADVPIFVKGHAAFAEGIGEILHIAEPEEKWYLVAHPGIEISTLRVFTDPELKRDTPIRPLAALLKAPYLNDCESLVRKRFRKVEQLLSWLLEYAPSRLTGTGACVFGEFESEASARKVLNQAPEWLQGFVARGVNNSPLHNFRSGIPVLLSQ.

The active site involves K10. Residue 99–109 (PMGGGLGGGSS) coordinates ATP. The active site involves D141.

Belongs to the GHMP kinase family. IspE subfamily. In terms of assembly, homodimer.

The catalysed reaction is 4-CDP-2-C-methyl-D-erythritol + ATP = 4-CDP-2-C-methyl-D-erythritol 2-phosphate + ADP + H(+). The protein operates within isoprenoid biosynthesis; isopentenyl diphosphate biosynthesis via DXP pathway; isopentenyl diphosphate from 1-deoxy-D-xylulose 5-phosphate: step 3/6. Catalyzes the phosphorylation of the position 2 hydroxy group of 4-diphosphocytidyl-2C-methyl-D-erythritol. This chain is 4-diphosphocytidyl-2-C-methyl-D-erythritol kinase, found in Photorhabdus laumondii subsp. laumondii (strain DSM 15139 / CIP 105565 / TT01) (Photorhabdus luminescens subsp. laumondii).